A 937-amino-acid polypeptide reads, in one-letter code: Protein SEY1 homolog (937 aa).

At 1-848 (MEKGVEKTQI…ETGSKMSLKN (848 aa)) the chain is on the cytoplasmic side. The GB1/RHD3-type G domain occupies 34–280 (GFSYNVIAVL…IPSDGFAQYC (247 aa)). Residue 44 to 51 (GSQSSGKS) participates in GTP binding. Coiled coils occupy residues 319-339 (NKEI…NFKE) and 725-750 (YLDE…IIIQ). A helical membrane pass occupies residues 849–869 (VPVVFWIILLLFGWNEILFFI). Residues 870–872 (RMF) are Lumenal-facing. The chain crosses the membrane as a helical span at residues 873 to 893 (FKLNVILPLFFAAAFIVSTFV). Topologically, residues 894 to 937 (YNGNTQALSYINKIIFYMAKNSYNFFKHIQAISNPPPKNVQKQE) are cytoplasmic.

Belongs to the TRAFAC class dynamin-like GTPase superfamily. GB1/RHD3 GTPase family. RHD3 subfamily.

The protein localises to the endoplasmic reticulum membrane. Probable GTP-binding protein involved in generating and maintaining the structure of the tubular endoplasmic reticulum network. The protein is Protein SEY1 homolog of Plasmodium falciparum (isolate 3D7).